Consider the following 103-residue polypeptide: Endoribonuclease MazF3 (103 aa).

The protein belongs to the PemK/MazF family. As to quaternary structure, forms a complex with cognate antitoxin MazE3.

Toxic component of a type II toxin-antitoxin (TA) system. Acts as an endoribonuclease, cleaving in U-rich regions. Neutralized by cognate antitoxin MazE3. The chain is Endoribonuclease MazF3 (mazF3) from Mycobacterium tuberculosis (strain CDC 1551 / Oshkosh).